The chain runs to 276 residues: Probable transposase for insertion sequence element IS702 (276 aa).

The region spanning 118 to 256 (MDVTESPIER…SNQYRNRHRR (139 aa)) is the DDE Tnp4 domain. A divalent metal cation contacts are provided by Asp119, Asp170, Asp190, and Glu234.

Belongs to the transposase 11 family. A divalent metal cation serves as cofactor.

Functionally, involved in the transposition of the insertion sequence. The polypeptide is Probable transposase for insertion sequence element IS702 (Microchaete diplosiphon (Fremyella diplosiphon)).